A 197-amino-acid chain; its full sequence is MRTATIKRKTKETDIEVTVNLDGAGVSNAATGIGFFDHMLDLLAKHSRIDITVKAVGDLHVDFHHTTEDVGIALGQAVRQALGNMAGIIRYASMLMPMDETLTRVVIDVSGRPFLVFKAEFPRDKIGEFDTELVREWFQAFAMNAGVTLHVETLYGENSHHIAESCFKGLARALRAAVAIDPQAAGEVPSTKGQLGG.

The protein belongs to the imidazoleglycerol-phosphate dehydratase family.

It is found in the cytoplasm. The enzyme catalyses D-erythro-1-(imidazol-4-yl)glycerol 3-phosphate = 3-(imidazol-4-yl)-2-oxopropyl phosphate + H2O. The protein operates within amino-acid biosynthesis; L-histidine biosynthesis; L-histidine from 5-phospho-alpha-D-ribose 1-diphosphate: step 6/9. This is Imidazoleglycerol-phosphate dehydratase from Rhodopseudomonas palustris (strain HaA2).